Reading from the N-terminus, the 406-residue chain is Putative F-box protein At5g38270 (406 aa).

The F-box domain maps to 20–67; that stretch reads HDWSKLCPDILRSILESLSSTDFHRAKTVCSDWYSNWKTCVKPLCPWR.

The polypeptide is Putative F-box protein At5g38270 (Arabidopsis thaliana (Mouse-ear cress)).